The sequence spans 129 residues: ATP synthase epsilon chain (129 aa).

It belongs to the ATPase epsilon chain family. F-type ATPases have 2 components, CF(1) - the catalytic core - and CF(0) - the membrane proton channel. CF(1) has five subunits: alpha(3), beta(3), gamma(1), delta(1), epsilon(1). CF(0) has three main subunits: a, b and c.

The protein localises to the cell inner membrane. In terms of biological role, produces ATP from ADP in the presence of a proton gradient across the membrane. The sequence is that of ATP synthase epsilon chain from Campylobacter jejuni subsp. doylei (strain ATCC BAA-1458 / RM4099 / 269.97).